A 452-amino-acid polypeptide reads, in one-letter code: MTDRPFAALILAAGKGTRMKSDLHKVLHPIAGKPMLGHLIAAVDRLGAARKLVVTGAGREQVEAFVAPLGVEVATQEPQLGTAHAVQQGEAALADFDGDVLILYGDVPLVPAETIRRMLDRLQGEDAPVAVVLGFRPDDALAYGRILARGDGAIDDMVEYKDATTEQRAIDLCNSGLMAVRGRDLWRLLAQVGNDNAAGEYYLPDIVRIARAEGGRSVVVEAEAWEVAGVNSRAELAAVEAEWQRRRRLAAMADGATLIAPETVWFSHDTMVGRDVVIEPHVVFGPGVTIEDGVAIHGFSHVEGATVRTGAEIGPYARLRPGADIGEGAKIGNFVEVKNGRFGKGAKANHLSYIGDADVGAKANIGAGTITCNYDGFLKYRTVIGEGAFIGSNSALVAPVTIGDGAIVGAGSTVTRDVEADALAVARGKQESRTGWAARFREAMKIKKAARK.

The tract at residues 1–233 (MTDRPFAALI…AWEVAGVNSR (233 aa)) is pyrophosphorylase. Residues 11–14 (LAAG), Lys-25, Gln-76, 81–82 (GT), 104–106 (YGD), Gly-144, Glu-159, Asn-174, and Asn-231 contribute to the UDP-N-acetyl-alpha-D-glucosamine site. A Mg(2+)-binding site is contributed by Asp-106. Asn-231 is a Mg(2+) binding site. The interval 234 to 254 (AELAAVEAEWQRRRRLAAMAD) is linker. An N-acetyltransferase region spans residues 255 to 452 (GATLIAPETV…AMKIKKAARK (198 aa)). UDP-N-acetyl-alpha-D-glucosamine is bound by residues Arg-320 and Lys-338. The Proton acceptor role is filled by His-350. UDP-N-acetyl-alpha-D-glucosamine-binding residues include Tyr-353 and Asn-364. Residues Ala-367, 373 to 374 (NY), Ser-392, Ala-410, and Arg-427 each bind acetyl-CoA.

It in the N-terminal section; belongs to the N-acetylglucosamine-1-phosphate uridyltransferase family. This sequence in the C-terminal section; belongs to the transferase hexapeptide repeat family. As to quaternary structure, homotrimer. Mg(2+) is required as a cofactor.

It localises to the cytoplasm. It catalyses the reaction alpha-D-glucosamine 1-phosphate + acetyl-CoA = N-acetyl-alpha-D-glucosamine 1-phosphate + CoA + H(+). It carries out the reaction N-acetyl-alpha-D-glucosamine 1-phosphate + UTP + H(+) = UDP-N-acetyl-alpha-D-glucosamine + diphosphate. It functions in the pathway nucleotide-sugar biosynthesis; UDP-N-acetyl-alpha-D-glucosamine biosynthesis; N-acetyl-alpha-D-glucosamine 1-phosphate from alpha-D-glucosamine 6-phosphate (route II): step 2/2. It participates in nucleotide-sugar biosynthesis; UDP-N-acetyl-alpha-D-glucosamine biosynthesis; UDP-N-acetyl-alpha-D-glucosamine from N-acetyl-alpha-D-glucosamine 1-phosphate: step 1/1. Its pathway is bacterial outer membrane biogenesis; LPS lipid A biosynthesis. Its function is as follows. Catalyzes the last two sequential reactions in the de novo biosynthetic pathway for UDP-N-acetylglucosamine (UDP-GlcNAc). The C-terminal domain catalyzes the transfer of acetyl group from acetyl coenzyme A to glucosamine-1-phosphate (GlcN-1-P) to produce N-acetylglucosamine-1-phosphate (GlcNAc-1-P), which is converted into UDP-GlcNAc by the transfer of uridine 5-monophosphate (from uridine 5-triphosphate), a reaction catalyzed by the N-terminal domain. The chain is Bifunctional protein GlmU from Rhizorhabdus wittichii (strain DSM 6014 / CCUG 31198 / JCM 15750 / NBRC 105917 / EY 4224 / RW1) (Sphingomonas wittichii).